Reading from the N-terminus, the 443-residue chain is Glutamyl-tRNA reductase (443 aa).

Residues 49–52, serine 109, 114–116, and glutamine 120 each bind substrate; these read TCNR and ETQ. Cysteine 50 (nucleophile) is an active-site residue. Residue 189–194 participates in NADP(+) binding; that stretch reads GAGEMS.

It belongs to the glutamyl-tRNA reductase family. In terms of assembly, homodimer.

It catalyses the reaction (S)-4-amino-5-oxopentanoate + tRNA(Glu) + NADP(+) = L-glutamyl-tRNA(Glu) + NADPH + H(+). It functions in the pathway porphyrin-containing compound metabolism; protoporphyrin-IX biosynthesis; 5-aminolevulinate from L-glutamyl-tRNA(Glu): step 1/2. In terms of biological role, catalyzes the NADPH-dependent reduction of glutamyl-tRNA(Glu) to glutamate 1-semialdehyde (GSA). The protein is Glutamyl-tRNA reductase of Desulfitobacterium hafniense (strain DSM 10664 / DCB-2).